Here is a 208-residue protein sequence, read N- to C-terminus: MGRGKIEIKRIENANNRVVTFSKRRNGLVKKAKEITVLCDAKVALIIFASNGKMIDYCCPSMDLGAMLDQYQKLSGKKLWDAKHENLSNEIDRIKKENDSLQLELRHLKGEDIQSLNLKNLMAVEHAIEHGLDKVRDHQMEILISKRRNEKMMAEEQRQLTFQLQQQEMAIASNARGMMMRDHDGQFGYRVQPIQPNLQEKIMSLVID.

The MADS-box domain occupies 3-57 (RGKIEIKRIENANNRVVTFSKRRNGLVKKAKEITVLCDAKVALIIFASNGKMIDY). A coiled-coil region spans residues 75-117 (SGKKLWDAKHENLSNEIDRIKKENDSLQLELRHLKGEDIQSLN). One can recognise a K-box domain in the interval 84 to 170 (HENLSNEIDR…TFQLQQQEMA (87 aa)).

Forms a heterodimer with APETALA3, capable of binding to CArG-box sequences. AP3/PI heterodimer binds AP1 or SEP3 to form a ternary complex.

It is found in the nucleus. Functionally, probable transcription factor involved in the genetic control of flower development. Is required for normal development of petals and stamens in the wild-type flower. Forms a heterodimer with APETALA3 that is required for autoregulation of both AP3 and PI genes. AP3/PI heterodimer interacts with APETALA1 or SEPALLATA3 to form a ternary complex that could be responsible for the regulation of the genes involved in the flower development. AP3/PI heterodimer activates the expression of NAP. AP3/PI prevents GATA22/GNL and GATA21/GNC expression. This chain is Floral homeotic protein PISTILLATA (PI), found in Arabidopsis thaliana (Mouse-ear cress).